The following is a 32-amino-acid chain: Chaperone protein DnaK (32 aa).

Belongs to the heat shock protein 70 family.

Its function is as follows. Acts as a chaperone. The protein is Chaperone protein DnaK of Anabaena sp. (strain L31).